Here is a 489-residue protein sequence, read N- to C-terminus: Endoglucanase 4 (489 aa).

The first 25 residues, 1–25, serve as a signal peptide directing secretion; sequence MAGKSFMTPAIMLAMLLLISPETYA. Asp-81 (nucleophile) is an active-site residue. His-409 is a catalytic residue. N-linked (GlcNAc...) asparagine glycosylation occurs at Asn-453. Active-site residues include Asp-460 and Glu-469.

This sequence belongs to the glycosyl hydrolase 9 (cellulase E) family.

It is found in the secreted. It carries out the reaction Endohydrolysis of (1-&gt;4)-beta-D-glucosidic linkages in cellulose, lichenin and cereal beta-D-glucans.. In Arabidopsis thaliana (Mouse-ear cress), this protein is Endoglucanase 4.